A 637-amino-acid chain; its full sequence is DNA primase (637 aa).

Residues 39–63 (CPFHGEKTPSFNVNAEKGFYHCFGC) form a CHC2-type zinc finger. In terms of domain architecture, Toprim spans 257–338 (HEVYLMEGFM…QIVKVPEGLD (82 aa)). Residues E263, D307, and D309 each coordinate Mg(2+).

The protein belongs to the DnaG primase family. Monomer. Interacts with DnaB. Requires Zn(2+) as cofactor. The cofactor is Mg(2+).

The catalysed reaction is ssDNA + n NTP = ssDNA/pppN(pN)n-1 hybrid + (n-1) diphosphate.. Its function is as follows. RNA polymerase that catalyzes the synthesis of short RNA molecules used as primers for DNA polymerase during DNA replication. The polypeptide is DNA primase (Lactococcus lactis subsp. lactis (strain IL1403) (Streptococcus lactis)).